A 1212-amino-acid polypeptide reads, in one-letter code: Histone demethylase UTY (1212 aa).

TPR repeat units follow at residues 88 to 121 (SDFFCQLGHFNLLLEDYSKALSSYQRYYSLQTDY), 125 to 158 (AAFLYGLGLVYFYYNAFQWAIRAFQEVLYVDPNF), 165 to 193 (HLRLGFMFKMNTDYESSLKHFQLALIDCN), 200 to 233 (VEIQFHIAHLYETQRKYHSAKAAYEQLLQIESLP), 245 to 278 (GWMHHNMDLIGDNTTKERYAIQYLQKSLEEDPNS), 279 to 312 (GQSWYFLGRCYSCIGKVQDAFVSYRQSIDKSEAS), 313 to 346 (ADTWCSIGVLYQQQNQPMDALQAYICAVQLDHGH), and 347 to 380 (AAAWMDLGILYESCNQPQDAIKCYLNAARSKSCN). Basic and acidic residues predominate over residues 530 to 539 (FTKESKDSRS). The disordered stretch occupies residues 530 to 555 (FTKESKDSRSKSLTSKTSRKDRDTSN). Threonine 752 is subject to Phosphothreonine. Residues 865-886 (RRTQVKDYSDNESTCSDNSGRR) form a disordered region. One can recognise a JmjC domain in the interval 907–1070 (KWKLQLHELT…YKLAVERYEW (164 aa)). Positions 958, 960, and 1038 each coordinate Fe cation. Positions 1143, 1146, 1170, and 1173 each coordinate Zn(2+).

This sequence belongs to the UTX family. Binds TLE1 and TLE2. The cofactor is L-ascorbate. Fe(2+) is required as a cofactor.

The protein localises to the nucleus. It catalyses the reaction N(6),N(6),N(6)-trimethyl-L-lysyl(27)-[histone H3] + 2 2-oxoglutarate + 2 O2 = N(6)-methyl-L-lysyl(27)-[histone H3] + 2 formaldehyde + 2 succinate + 2 CO2. In terms of biological role, male-specific histone demethylase that catalyzes trimethylated 'Lys-27' (H3K27me3) demethylation in histone H3. Has relatively low KDM activity. The polypeptide is Histone demethylase UTY (Uty) (Mus musculus (Mouse)).